We begin with the raw amino-acid sequence, 503 residues long: Alpha-1,3/1,6-mannosyltransferase ALG2 (503 aa).

Residues asparagine 59, asparagine 173, asparagine 262, and asparagine 403 are each glycosylated (N-linked (GlcNAc...) asparagine). 2 consecutive transmembrane segments (helical) span residues 444–466 (LWST…LITG) and 473–495 (LLLA…WIIV). Asparagine 500 is a glycosylation site (N-linked (GlcNAc...) asparagine).

This sequence belongs to the glycosyltransferase group 1 family.

The protein resides in the endoplasmic reticulum membrane. It catalyses the reaction a beta-D-Man-(1-&gt;4)-beta-D-GlcNAc-(1-&gt;4)-alpha-D-GlcNAc-diphospho-di-trans,poly-cis-dolichol + GDP-alpha-D-mannose = an alpha-D-Man-(1-&gt;3)-beta-D-Man-(1-&gt;4)-beta-D-GlcNAc-(1-&gt;4)-alpha-D-GlcNAc-diphospho-di-trans,poly-cis-dolichol + GDP + H(+). The enzyme catalyses an alpha-D-Man-(1-&gt;3)-beta-D-Man-(1-&gt;4)-beta-D-GlcNAc-(1-&gt;4)-alpha-D-GlcNAc-diphospho-di-trans,poly-cis-dolichol + GDP-alpha-D-mannose = an alpha-D-Man-(1-&gt;3)-[alpha-D-Man-(1-&gt;6)]-beta-D-Man-(1-&gt;4)-beta-D-GlcNAc-(1-&gt;4)-alpha-D-GlcNAc-diphospho-di-trans,poly-cis-dolichol + GDP + H(+). It participates in protein modification; protein glycosylation. In terms of biological role, mannosylates Man(2)GlcNAc(2)-dolichol diphosphate and Man(1)GlcNAc(2)-dolichol diphosphate to form Man(3)GlcNAc(2)-dolichol diphosphate. The sequence is that of Alpha-1,3/1,6-mannosyltransferase ALG2 (ALG2) from Kluyveromyces lactis (strain ATCC 8585 / CBS 2359 / DSM 70799 / NBRC 1267 / NRRL Y-1140 / WM37) (Yeast).